The primary structure comprises 3779 residues: Protein DDB_G0268328 (3779 aa).

Disordered regions lie at residues 24 to 56, 1001 to 1028, 1137 to 1165, 1513 to 1538, 1656 to 1690, 2027 to 2054, 2144 to 2184, 2280 to 2325, 2508 to 2527, 2720 to 2748, 2975 to 3030, and 3427 to 3450; these read RQIKSQNKLQNKSQNNGNNNNNKDNNNINKDGS, HEDEEEEGDGDNSNNSNSQDSDGDDDDD, QDSTLPKRKQHGYYHQQQQQQQYHQQQQQ, PTNSIYNNNNNNNNNNNNTNSSSLLS, ETTVLEKETKETKDNNLENNNNNTNNSNNNNNNKE, SNSSNNNNNNNDGSTTSTTTLNRSDSNN, NNNN…NNSS, ISTT…NEQQ, QINNNNNNNEKEEEEEREEG, DGNNNNNNNNNQNNNNQNNNNNQNNNDSS, ESND…DSIK, and QSNTLNGTGGGGGNGGGNNGSGKL. Low complexity-rich tracts occupy residues 26–56, 1011–1020, 1149–1165, and 1515–1538; these read IKSQNKLQNKSQNNGNNNNNKDNNNINKDGS, DNSNNSNSQD, YYHQQQQQQQYHQQQQQ, and NSIYNNNNNNNNNNNNTNSSSLLS. A compositionally biased stretch (basic and acidic residues) spans 1656-1671; the sequence is ETTVLEKETKETKDNN. Over residues 1672–1687 the composition is skewed to low complexity; sequence LENNNNNTNNSNNNNN. Low complexity-rich tracts occupy residues 2144-2182 and 2285-2322; these read NNNNNNNNNNNNNNNNNNNNNNNNNNNNNNNNNNNNNNN and NNNNNNNNNNNNNNNNNNNNNNNNNNNNNNNNNNNNNN. Composition is skewed to low complexity over residues 2722–2745 and 3015–3030; these read NNNNNNNNNQNNNNQNNNNNQNNN and SVNNNNNNNSNSDSIK. The span at 3433–3446 shows a compositional bias: gly residues; the sequence is GTGGGGGNGGGNNG.

The polypeptide is Protein DDB_G0268328 (Dictyostelium discoideum (Social amoeba)).